A 217-amino-acid polypeptide reads, in one-letter code: Flagellar L-ring protein 1 (217 aa).

Positions 1-16 (MTLARLAPLAALLLAA) are cleaved as a signal peptide. C17 carries N-palmitoyl cysteine lipidation. C17 is lipidated: S-diacylglycerol cysteine.

This sequence belongs to the FlgH family. The basal body constitutes a major portion of the flagellar organelle and consists of four rings (L,P,S, and M) mounted on a central rod.

The protein localises to the cell outer membrane. Its subcellular location is the bacterial flagellum basal body. In terms of biological role, assembles around the rod to form the L-ring and probably protects the motor/basal body from shearing forces during rotation. The sequence is that of Flagellar L-ring protein 1 from Chromobacterium violaceum (strain ATCC 12472 / DSM 30191 / JCM 1249 / CCUG 213 / NBRC 12614 / NCIMB 9131 / NCTC 9757 / MK).